Here is a 294-residue protein sequence, read N- to C-terminus: 3-methyl-2-oxobutanoate hydroxymethyltransferase (294 aa).

Residues 1-12 (MSASAESTNATP) show a composition bias toward polar residues. Residues 1–21 (MSASAESTNATPYGTLPPTAA) are disordered. 2 residues coordinate Mg(2+): Asp69 and Asp112. 3-methyl-2-oxobutanoate-binding positions include 69–70 (DS), Asp112, and Lys141. Glu143 is a Mg(2+) binding site. Glu210 acts as the Proton acceptor in catalysis.

This sequence belongs to the PanB family. In terms of assembly, homodecamer; pentamer of dimers. It depends on Mg(2+) as a cofactor.

It localises to the cytoplasm. It catalyses the reaction 3-methyl-2-oxobutanoate + (6R)-5,10-methylene-5,6,7,8-tetrahydrofolate + H2O = 2-dehydropantoate + (6S)-5,6,7,8-tetrahydrofolate. The protein operates within cofactor biosynthesis; (R)-pantothenate biosynthesis; (R)-pantoate from 3-methyl-2-oxobutanoate: step 1/2. Catalyzes the reversible reaction in which hydroxymethyl group from 5,10-methylenetetrahydrofolate is transferred onto alpha-ketoisovalerate to form ketopantoate. The polypeptide is 3-methyl-2-oxobutanoate hydroxymethyltransferase (Albidiferax ferrireducens (strain ATCC BAA-621 / DSM 15236 / T118) (Rhodoferax ferrireducens)).